Consider the following 950-residue polypeptide: Xylosyltransferase 1 (950 aa).

At 1 to 17 (MVAAPSARRLVRRSHSA) the chain is on the cytoplasmic side. Residues 18–38 (LLAALTVLLLQTLVGWNFSSL) form a helical; Signal-anchor for type II membrane protein membrane-spanning segment. Residues 39-950 (HSGAGERRGG…GAVKPDGRLR (912 aa)) lie on the Lumenal side of the membrane. The tract at residues 42–246 (AGERRGGAAA…ELRYDQPPKC (205 aa)) is disordered. The segment covering 91-104 (PPARARARALAGCP) has biased composition (low complexity). Basic and acidic residues predominate over residues 134 to 150 (KVRTDSNNENSVPKDFE). The segment covering 152–161 (VDNSNFAPRT) has biased composition (polar residues). Over residues 166 to 193 (HQPELAKKPPSRQKELLKRRLEQEEKGK) the composition is skewed to basic and acidic residues. The N-linked (GlcNAc...) asparagine glycan is linked to Asn215. Cystine bridges form between Cys246–Cys274, Cys290–Cys531, Cys550–Cys563, and Cys552–Cys561. UDP-alpha-D-xylose is bound by residues Val322, Asp350, and 379–381 (TIW). N-linked (GlcNAc...) asparagine glycosylation is present at Asn410. 483–484 (DW) lines the UDP-alpha-D-xylose pocket. Residues Ser564 and 587 to 588 (RK) contribute to the UDP-alpha-D-xylose site. Intrachain disulfides connect Cys664-Cys918 and Cys911-Cys924. Residue Asn768 is glycosylated (N-linked (GlcNAc...) asparagine). The tract at residues 931–950 (SFSPDPKSELGAVKPDGRLR) is disordered.

It belongs to the glycosyltransferase 14 family. XylT subfamily. Monomer. It depends on a divalent metal cation as a cofactor. Contains 7 disulfide bonds. Post-translationally, N-glycosylated.

It localises to the golgi apparatus membrane. The catalysed reaction is UDP-alpha-D-xylose + L-seryl-[protein] = 3-O-(beta-D-xylosyl)-L-seryl-[protein] + UDP + H(+). The protein operates within glycan metabolism; chondroitin sulfate biosynthesis. Its pathway is glycan metabolism; heparan sulfate biosynthesis. In terms of biological role, catalyzes the first step in the biosynthesis of chondroitin sulfate and dermatan sulfate proteoglycans, such as DCN. Transfers D-xylose from UDP-D-xylose to specific serine residues of the core protein. Required for normal maturation of chondrocytes during bone development, normal onset of ossification and normal embryonic and postnatal skeleton development, especially of the long bones. The sequence is that of Xylosyltransferase 1 (XYLT1) from Canis lupus familiaris (Dog).